A 164-amino-acid chain; its full sequence is Microfibrillar-associated protein 5 (164 aa).

Positions Met1–Gly28 are cleaved as a signal peptide. The Cell attachment site signature appears at Arg30–Asp32. N-linked (GlcNAc...) asparagine glycosylation is present at Asn70.

Belongs to the MFAP family. In terms of assembly, interacts with TGFB2. Interacts with BMP2. Interacts with FBN1 (via N-terminal domain) and FBN2. Post-translationally, forms intermolecular disulfide bonds either with other MAGP-2 molecules or with other components of the microfibrils.

The protein localises to the secreted. It localises to the extracellular space. It is found in the extracellular matrix. May play a role in hematopoiesis. In the cardiovascular system, could regulate growth factors or participate in cell signaling in maintaining large vessel integrity. Component of the elastin-associated microfibrils. The chain is Microfibrillar-associated protein 5 (Mfap5) from Mus musculus (Mouse).